The chain runs to 484 residues: Sulfoacetaldehyde dehydrogenase (484 aa).

NAD(+) is bound by residues 105 to 110 (LTPVTN), Gly-188, and Gly-206. The active-site Nucleophile is Cys-239. Glu-332 and Leu-412 together coordinate NAD(+).

It belongs to the aldehyde dehydrogenase family.

It carries out the reaction sulfoacetaldehyde + NAD(+) + CoA = sulfoacetyl-CoA + NADH + H(+). Part of a variant of the sulfo-TK pathway, a D-sulfoquinovose degradation pathway that produces sulfoacetate. Catalyzes the oxidation of sulfoacetaldehyde (SA) to sulfoacetyl-coenzyme A (sulfoacetyl-CoA). Is highly specific for NAD(+), with only residual (1%) activity with NADP(+). Cannot use acetaldehyde. This Acholeplasma sp protein is Sulfoacetaldehyde dehydrogenase.